Consider the following 485-residue polypeptide: Glutamyl-tRNA(Gln) amidotransferase subunit A (485 aa).

Catalysis depends on charge relay system residues lysine 74 and serine 149. The active-site Acyl-ester intermediate is serine 173.

Belongs to the amidase family. GatA subfamily. As to quaternary structure, heterotrimer of A, B and C subunits.

It carries out the reaction L-glutamyl-tRNA(Gln) + L-glutamine + ATP + H2O = L-glutaminyl-tRNA(Gln) + L-glutamate + ADP + phosphate + H(+). Its function is as follows. Allows the formation of correctly charged Gln-tRNA(Gln) through the transamidation of misacylated Glu-tRNA(Gln) in organisms which lack glutaminyl-tRNA synthetase. The reaction takes place in the presence of glutamine and ATP through an activated gamma-phospho-Glu-tRNA(Gln). This Herminiimonas arsenicoxydans protein is Glutamyl-tRNA(Gln) amidotransferase subunit A.